Reading from the N-terminus, the 233-residue chain is tRNA (guanine-N(7)-)-methyltransferase (233 aa).

Positions 62, 87, 116, and 138 each coordinate S-adenosyl-L-methionine. D138 is a catalytic residue. Substrate contacts are provided by residues K142, D174, and 212 to 215; that span reads TRYE.

It belongs to the class I-like SAM-binding methyltransferase superfamily. TrmB family.

The catalysed reaction is guanosine(46) in tRNA + S-adenosyl-L-methionine = N(7)-methylguanosine(46) in tRNA + S-adenosyl-L-homocysteine. Its pathway is tRNA modification; N(7)-methylguanine-tRNA biosynthesis. Catalyzes the formation of N(7)-methylguanine at position 46 (m7G46) in tRNA. The polypeptide is tRNA (guanine-N(7)-)-methyltransferase (Bartonella henselae (strain ATCC 49882 / DSM 28221 / CCUG 30454 / Houston 1) (Rochalimaea henselae)).